The primary structure comprises 503 residues: Aromatase 1 (503 aa).

Cys-437 provides a ligand contact to heme.

This sequence belongs to the cytochrome P450 family. Heme is required as a cofactor.

Its subcellular location is the membrane. It carries out the reaction testosterone + 3 reduced [NADPH--hemoprotein reductase] + 3 O2 = 17beta-estradiol + formate + 3 oxidized [NADPH--hemoprotein reductase] + 4 H2O + 4 H(+). The enzyme catalyses androst-4-ene-3,17-dione + 3 reduced [NADPH--hemoprotein reductase] + 3 O2 = estrone + formate + 3 oxidized [NADPH--hemoprotein reductase] + 4 H2O + 4 H(+). In terms of biological role, catalyzes the formation of aromatic C18 estrogens from C19 androgens. The sequence is that of Aromatase 1 (CYP19A1) from Sus scrofa (Pig).